Reading from the N-terminus, the 359-residue chain is Mannonate dehydratase (359 aa).

This sequence belongs to the mannonate dehydratase family. Fe(2+) is required as a cofactor. Requires Mn(2+) as cofactor.

It carries out the reaction D-mannonate = 2-dehydro-3-deoxy-D-gluconate + H2O. It participates in carbohydrate metabolism; pentose and glucuronate interconversion. Its function is as follows. Catalyzes the dehydration of D-mannonate. The sequence is that of Mannonate dehydratase from Moorella thermoacetica (strain ATCC 39073 / JCM 9320).